A 569-amino-acid chain; its full sequence is Urease subunit alpha (569 aa).

Residues 131–569 enclose the Urease domain; it reads GAIDSHIHFI…LPLAQRYLLL (439 aa). 3 residues coordinate Ni(2+): His136, His138, and Lys219. Position 219 is an N6-carboxylysine (Lys219). His221 serves as a coordination point for substrate. 2 residues coordinate Ni(2+): His248 and His274. The active-site Proton donor is the His322. Asp362 contributes to the Ni(2+) binding site.

Belongs to the metallo-dependent hydrolases superfamily. Urease alpha subunit family. In terms of assembly, heterotrimer of UreA (gamma), UreB (beta) and UreC (alpha) subunits. Three heterotrimers associate to form the active enzyme. Ni cation is required as a cofactor. Post-translationally, carboxylation allows a single lysine to coordinate two nickel ions.

It is found in the cytoplasm. It catalyses the reaction urea + 2 H2O + H(+) = hydrogencarbonate + 2 NH4(+). Its pathway is nitrogen metabolism; urea degradation; CO(2) and NH(3) from urea (urease route): step 1/1. The chain is Urease subunit alpha from Prochlorococcus marinus (strain NATL2A).